We begin with the raw amino-acid sequence, 379 residues long: Chaperone protein DnaJ (379 aa).

Positions 5–70 (DYYESLGVAK…QKRAAYDQYG (66 aa)) constitute a J domain. The CR-type zinc-finger motif lies at 134-212 (GVTKEIRIPA…CHGHGRVEKS (79 aa)). Positions 147, 150, 164, 167, 186, 189, 200, and 203 each coordinate Zn(2+). CXXCXGXG motif repeat units follow at residues 147-154 (CDVCHGNG), 164-171 (CPTCHGNG), 186-193 (CPHCHGRG), and 200-207 (CIKCHGHG).

It belongs to the DnaJ family. As to quaternary structure, homodimer. Zn(2+) is required as a cofactor.

It is found in the cytoplasm. In terms of biological role, participates actively in the response to hyperosmotic and heat shock by preventing the aggregation of stress-denatured proteins and by disaggregating proteins, also in an autonomous, DnaK-independent fashion. Unfolded proteins bind initially to DnaJ; upon interaction with the DnaJ-bound protein, DnaK hydrolyzes its bound ATP, resulting in the formation of a stable complex. GrpE releases ADP from DnaK; ATP binding to DnaK triggers the release of the substrate protein, thus completing the reaction cycle. Several rounds of ATP-dependent interactions between DnaJ, DnaK and GrpE are required for fully efficient folding. Also involved, together with DnaK and GrpE, in the DNA replication of plasmids through activation of initiation proteins. The chain is Chaperone protein DnaJ from Pectobacterium atrosepticum (strain SCRI 1043 / ATCC BAA-672) (Erwinia carotovora subsp. atroseptica).